The chain runs to 83 residues: Calsensin (83 aa).

EF-hand domains lie at 4-39 and 46-81; these read KVKAELEAAFKKLDANGDGYVTALELQTFMVTLDAY and KVKEASAKLIKMADKNSDGKISKEEFLNANAELLCQ. 10 residues coordinate Ca(2+): Asp-17, Asn-19, Asp-21, Tyr-23, Glu-28, Asp-59, Asn-61, Asp-63, Lys-65, and Glu-70.

As to expression, selectively expressed in a small group of neurons.

The protein resides in the cytoplasm. In terms of biological role, may function as a trigger protein which interacts with a larger protein. May mediate calcium-dependent signal transduction events in the growth cones and axons of a small group of sensory neurons which fasciculate in a single axon tract. The protein is Calsensin of Haemopis marmorata (Green horse leech).